A 564-amino-acid polypeptide reads, in one-letter code: Dihydroxy-acid dehydratase (564 aa).

A [2Fe-2S] cluster-binding site is contributed by Cys53. Asp85 contributes to the Mg(2+) binding site. Residue Cys126 participates in [2Fe-2S] cluster binding. Residues Asp127 and Lys128 each coordinate Mg(2+). Lys128 carries the post-translational modification N6-carboxylysine. Cys203 is a binding site for [2Fe-2S] cluster. Glu454 provides a ligand contact to Mg(2+). Ser480 serves as the catalytic Proton acceptor.

It belongs to the IlvD/Edd family. Homodimer. Requires [2Fe-2S] cluster as cofactor. The cofactor is Mg(2+).

The catalysed reaction is (2R)-2,3-dihydroxy-3-methylbutanoate = 3-methyl-2-oxobutanoate + H2O. The enzyme catalyses (2R,3R)-2,3-dihydroxy-3-methylpentanoate = (S)-3-methyl-2-oxopentanoate + H2O. The protein operates within amino-acid biosynthesis; L-isoleucine biosynthesis; L-isoleucine from 2-oxobutanoate: step 3/4. It participates in amino-acid biosynthesis; L-valine biosynthesis; L-valine from pyruvate: step 3/4. In terms of biological role, functions in the biosynthesis of branched-chain amino acids. Catalyzes the dehydration of (2R,3R)-2,3-dihydroxy-3-methylpentanoate (2,3-dihydroxy-3-methylvalerate) into 2-oxo-3-methylpentanoate (2-oxo-3-methylvalerate) and of (2R)-2,3-dihydroxy-3-methylbutanoate (2,3-dihydroxyisovalerate) into 2-oxo-3-methylbutanoate (2-oxoisovalerate), the penultimate precursor to L-isoleucine and L-valine, respectively. This chain is Dihydroxy-acid dehydratase, found in Mycobacterium ulcerans (strain Agy99).